Here is a 107-residue protein sequence, read N- to C-terminus: Hydrogenase expression/formation protein HoxL (107 aa).

The protein belongs to the HupF/HypC family.

The chain is Hydrogenase expression/formation protein HoxL (hoxL) from Cupriavidus necator (strain ATCC 17699 / DSM 428 / KCTC 22496 / NCIMB 10442 / H16 / Stanier 337) (Ralstonia eutropha).